A 1386-amino-acid polypeptide reads, in one-letter code: Putative ATP-dependent RNA helicase DHX57 (1386 aa).

Residues 1-11 (MSSSVRRKGKP) show a composition bias toward basic residues. Disordered stretches follow at residues 1–106 (MSSS…MTSE) and 120–147 (EQDA…NDER). Gly residues-rich tracts occupy residues 12 to 23 (GKGGGKGSSRGG) and 35 to 50 (GSGG…GGGN). Residues 101-125 (LHMTSENQEKVKALLRDLQEQDADA) adopt a coiled-coil conformation. Phosphoserine occurs at positions 127 and 132. The span at 133–143 (GEEEDDEPDCC) shows a compositional bias: acidic residues. The UBA domain occupies 180–220 (TVSPFAVQKLSRYGFNTERCQAVLRMCDGDVGASLEHLLTQ). The C3H1-type zinc-finger motif lies at 299 to 326 (ENSLEICKFYLKGNCKFGSKCRFKHEVP). A phosphoserine mark is found at serine 475, serine 477, and serine 480. Residues 554-721 (LNLLRKHQVV…FNSCPVITIP (168 aa)) enclose the Helicase ATP-binding domain. 567 to 574 (GMTGCGKT) contacts ATP. The DEVH box motif lies at 668-671 (DEVH). The Helicase C-terminal domain occupies 830 to 1010 (LIEALLEWIV…QLCLRIKILE (181 aa)).

Belongs to the DEAD box helicase family. DEAH subfamily.

The enzyme catalyses ATP + H2O = ADP + phosphate + H(+). Probable ATP-binding RNA helicase. This chain is Putative ATP-dependent RNA helicase DHX57 (DHX57), found in Homo sapiens (Human).